Consider the following 437-residue polypeptide: Sperm-associated antigen 4 protein (437 aa).

Residues 1–12 (MRRSSRPGSASS) show a composition bias toward low complexity. Residues 1–88 (MRRSSRPGSA…KPAPRSHNWQ (88 aa)) form a disordered region. Polar residues-rich tracts occupy residues 19–31 (NFFS…SITS) and 72–88 (WAGS…HNWQ). 2 consecutive transmembrane segments (helical) span residues 135–155 (FLSL…DVLV) and 166–186 (FLFT…LGLL). The stretch at 197–244 (KEMLTLSEYHERVRSQGQQLQQLQAELDKLHKEVSTVRAANSERVAKL) forms a coiled coil. The region spanning 265 to 425 (GASIDLQKTS…YRVRAHGVRT (161 aa)) is the SUN domain.

Homodimer. Interacts with ODF1. May associate with microtubules. Interacts with SUN3 and SYNE1; suggesting the formation of a spermatogenesis-specific LINC complex; a SUN domain-based heterotrimer with SUN3 may associate with SYNE1. Interacts with SEPT12 and LMNB1; during spermatogenesis. As to expression, predominantly epressed in testis. Expressed in ejaculated spermatozoa (at protein level).

It localises to the membrane. The protein resides in the cytoplasm. Its subcellular location is the cytoskeleton. The protein localises to the flagellum axoneme. It is found in the nucleus envelope. It localises to the nucleus inner membrane. Its function is as follows. Involved in spermatogenesis. Required for sperm head formation but not required to establish and maintain general polarity of the sperm head. Required for anchoring and organization of the manchette. Required for targeting of SUN3 and probably SYNE1 through a probable SUN1:SYNE3 LINC complex to the nuclear envelope and involved in accurate posterior sperm head localization of the complex. May anchor SUN3 the nuclear envelope. Involved in maintenance of the nuclear envelope integrity. May assist the organization and assembly of outer dense fibers (ODFs), a specific structure of the sperm tail. The polypeptide is Sperm-associated antigen 4 protein (SPAG4) (Homo sapiens (Human)).